The primary structure comprises 183 residues: Probable GTP-binding protein EngB (183 aa).

An EngB-type G domain is found at 18-183; it reads DQNEIVFWGR…LSDLVEHFEL (166 aa). GTP is bound by residues 26 to 33, 52 to 56, 70 to 73, 137 to 140, and 166 to 168; these read GRSNVGKS, GRTRL, DLPG, TKID, and VSS. Positions 33 and 54 each coordinate Mg(2+).

This sequence belongs to the TRAFAC class TrmE-Era-EngA-EngB-Septin-like GTPase superfamily. EngB GTPase family. Requires Mg(2+) as cofactor.

Necessary for normal cell division and for the maintenance of normal septation. This is Probable GTP-binding protein EngB from Metamycoplasma arthritidis (strain 158L3-1) (Mycoplasma arthritidis).